Here is a 194-residue protein sequence, read N- to C-terminus: Fe/S biogenesis protein NfuA (194 aa).

Residues C152 and C155 each coordinate [4Fe-4S] cluster.

Belongs to the NfuA family. Homodimer. [4Fe-4S] cluster serves as cofactor.

Involved in iron-sulfur cluster biogenesis. Binds a 4Fe-4S cluster, can transfer this cluster to apoproteins, and thereby intervenes in the maturation of Fe/S proteins. Could also act as a scaffold/chaperone for damaged Fe/S proteins. This Pseudomonas fluorescens (strain SBW25) protein is Fe/S biogenesis protein NfuA.